The following is a 330-amino-acid chain: GTPase Obg (330 aa).

Residues 1 to 159 enclose the Obg domain; it reads MHFIDEVKIY…MWIHLSLKLL (159 aa). The OBG-type G domain maps to 160–327; sequence SDVGLVGFPN…IVKLALETIK (168 aa). GTP is bound by residues 166 to 173, 191 to 195, 212 to 215, 279 to 282, and 308 to 310; these read GFPNAGKS, FTTLV, DIPG, NKCD, and STY. 2 residues coordinate Mg(2+): Ser173 and Thr193.

This sequence belongs to the TRAFAC class OBG-HflX-like GTPase superfamily. OBG GTPase family. Monomer. It depends on Mg(2+) as a cofactor.

The protein localises to the cytoplasm. Functionally, an essential GTPase which binds GTP, GDP and possibly (p)ppGpp with moderate affinity, with high nucleotide exchange rates and a fairly low GTP hydrolysis rate. Plays a role in control of the cell cycle, stress response, ribosome biogenesis and in those bacteria that undergo differentiation, in morphogenesis control. The chain is GTPase Obg from Rickettsia massiliae (strain Mtu5).